Reading from the N-terminus, the 456-residue chain is Mitochondrial import inner membrane translocase subunit TIM50 (456 aa).

The transit peptide at 1-22 (MSLSKLSQKCFSRHHARTFIRF) directs the protein to the mitochondrion. The Mitochondrial matrix segment spans residues 23-171 (SSSDFQSLLG…RRKRMERNTR (149 aa)). 2 disordered regions span residues 101 to 120 (ETEK…AIDE) and 132 to 165 (EEAA…RRKR). Polar residues predominate over residues 137-153 (SKTSAPSGSSGDNNDQP). Residues 172-192 (IGGYVLLGGSVIGFISFCFYY) traverse the membrane as a helical segment. Topologically, residues 193–456 (GRAQRDEAGN…LFGFRRHASA (264 aa)) are mitochondrial intermembrane. One can recognise an FCP1 homology domain in the interval 247–391 (YLQPKYTIVI…VDLAELLKTI (145 aa)).

Belongs to the TIM50 family. As to quaternary structure, component of the TIM23 complex at least composed of tim-23, tim-17 and tim-50.

The protein localises to the mitochondrion inner membrane. In terms of biological role, essential component of the TIM23 complex, a complex that mediates the translocation of transit peptide-containing proteins across the mitochondrial inner membrane. The polypeptide is Mitochondrial import inner membrane translocase subunit TIM50 (scpl-4) (Caenorhabditis briggsae).